Reading from the N-terminus, the 98-residue chain is Small ribosomal subunit protein bS20 (98 aa).

The segment covering 1–12 has biased composition (basic residues); the sequence is MAPRKPSKKVGP. The disordered stretch occupies residues 1–34; sequence MAPRKPSKKVGPQKRPSAEKRVITSKKKQLRNQS.

Belongs to the bacterial ribosomal protein bS20 family.

Its function is as follows. Binds directly to 16S ribosomal RNA. The chain is Small ribosomal subunit protein bS20 from Chlamydia muridarum (strain MoPn / Nigg).